The sequence spans 153 residues: Bursicon (153 aa).

Positions M1 to A22 are cleaved as a signal peptide. Intrachain disulfides connect C29/C78, C43/C92, C53/C113, C57/C115, and C75/C118. A CTCK domain is found at C29 to T119.

Heterodimer of burs and pburs.

It is found in the secreted. In terms of biological role, final heterodimeric neurohormone released at the end of the molting cycle, involved in the sclerotization (tanning) of the insect cuticle, melanization and wing spreading. In Apis mellifera (Honeybee), this protein is Bursicon.